Consider the following 255-residue polypeptide: Accessory gland-specific peptide 26Aa (255 aa).

The signal sequence occupies residues 1–18; that stretch reads MNLILLCSQILLLLFTVA. The tract at residues 86–110 is disordered; sequence PINNSKSRKNSSTLPSQILTDKPNQ. Residues 87-110 are compositionally biased toward polar residues; sequence INNSKSRKNSSTLPSQILTDKPNQ. N-linked (GlcNAc...) asparagine glycosylation is found at Asn88, Asn95, and Asn136. Disordered regions lie at residues 177–196 and 235–255; these read NAQN…SKDI and NNPA…PSTT. Positions 183–192 are enriched in basic residues; it reads KSTKSCKKRP. Residues 245-255 are compositionally biased toward polar residues; it reads KSPSEGNPSTT.

In terms of processing, it undergoes several cleavages as it is secreted and it is further processed in the recipient female. As to expression, main cells of the accessory glands of males.

It localises to the secreted. The protein resides in the extracellular space. Its function is as follows. This protein is transferred from male to female's hemolymph during mating, affecting egglaying and behavior after mating. This is Accessory gland-specific peptide 26Aa (Acp26Aa) from Drosophila sechellia (Fruit fly).